The following is a 444-amino-acid chain: Ribosomal protein uS12 methylthiotransferase RimO (444 aa).

Residues Ile-4 to Glu-118 form the MTTase N-terminal domain. [4Fe-4S] cluster-binding residues include Cys-13, Cys-48, Cys-81, Cys-155, Cys-159, and Cys-162. Positions Thr-141 to Asn-373 constitute a Radical SAM core domain. Residues Ala-374 to Asp-440 enclose the TRAM domain.

It belongs to the methylthiotransferase family. RimO subfamily. [4Fe-4S] cluster is required as a cofactor.

The protein resides in the cytoplasm. The catalysed reaction is L-aspartate(89)-[ribosomal protein uS12]-hydrogen + (sulfur carrier)-SH + AH2 + 2 S-adenosyl-L-methionine = 3-methylsulfanyl-L-aspartate(89)-[ribosomal protein uS12]-hydrogen + (sulfur carrier)-H + 5'-deoxyadenosine + L-methionine + A + S-adenosyl-L-homocysteine + 2 H(+). Catalyzes the methylthiolation of an aspartic acid residue of ribosomal protein uS12. The polypeptide is Ribosomal protein uS12 methylthiotransferase RimO (Clostridium tetani (strain Massachusetts / E88)).